We begin with the raw amino-acid sequence, 100 residues long: Small ribosomal subunit protein uS14c (100 aa).

This sequence belongs to the universal ribosomal protein uS14 family. As to quaternary structure, part of the 30S ribosomal subunit.

It is found in the plastid. It localises to the chloroplast. Its function is as follows. Binds 16S rRNA, required for the assembly of 30S particles. The sequence is that of Small ribosomal subunit protein uS14c from Morus indica (Mulberry).